We begin with the raw amino-acid sequence, 191 residues long: Lipid A acyltransferase PagP (191 aa).

A signal peptide spans 1–26 (MLKVNKYVILIIAFVSQMMFSTTAQA). Active-site residues include H63, D106, and S107.

The protein belongs to the lipid A palmitoyltransferase family. Homodimer.

The protein resides in the cell outer membrane. The enzyme catalyses a lipid A + a 1,2-diacyl-sn-glycero-3-phosphocholine = a hepta-acyl lipid A + a 2-acyl-sn-glycero-3-phosphocholine. It carries out the reaction a lipid IVA + a 1,2-diacyl-sn-glycero-3-phosphocholine = a lipid IVB + a 2-acyl-sn-glycero-3-phosphocholine. The catalysed reaction is a lipid IIA + a 1,2-diacyl-sn-glycero-3-phosphocholine = a lipid IIB + a 2-acyl-sn-glycero-3-phosphocholine. Its function is as follows. Transfers a fatty acid residue from the sn-1 position of a phospholipid to the N-linked hydroxyfatty acid chain on the proximal unit of lipid A or its precursors. The chain is Lipid A acyltransferase PagP from Enterobacter lignolyticus (strain SCF1).